Here is a 115-residue protein sequence, read N- to C-terminus: Immunoglobulin kappa variable 5-48 (115 aa).

An N-terminal signal peptide occupies residues 1–20; that stretch reads MVSTPQFLVFLLFWIPASRG. A framework-1 region spans residues 21-43; that stretch reads DILLTQSPAILSVSPGERVSFSC. A disulfide bridge links cysteine 43 with cysteine 108. The interval 44 to 54 is complementarity-determining-1; the sequence is RASQSIGTSIH. Residues 55–69 are framework-2; the sequence is WYQQRTNGSPRLLIK. A complementarity-determining-2 region spans residues 70–76; the sequence is YASESIS. The segment at 77 to 108 is framework-3; it reads GIPSRFSGSGSGTDFTLSINSVESEDIADYYC. Positions 109–115 are complementarity-determining-3; that stretch reads QQSNSWP.

In Mus musculus (Mouse), this protein is Immunoglobulin kappa variable 5-48.